The primary structure comprises 117 residues: Ribosome-binding factor A (117 aa).

This sequence belongs to the RbfA family. In terms of assembly, monomer. Binds 30S ribosomal subunits, but not 50S ribosomal subunits or 70S ribosomes.

The protein resides in the cytoplasm. In terms of biological role, one of several proteins that assist in the late maturation steps of the functional core of the 30S ribosomal subunit. Associates with free 30S ribosomal subunits (but not with 30S subunits that are part of 70S ribosomes or polysomes). Required for efficient processing of 16S rRNA. May interact with the 5'-terminal helix region of 16S rRNA. In Leptospira interrogans serogroup Icterohaemorrhagiae serovar Lai (strain 56601), this protein is Ribosome-binding factor A.